Here is a 921-residue protein sequence, read N- to C-terminus: TRPM8 channel-associated factor 1 (921 aa).

A Peptidase M60 domain is found at 542–841 (YCWMSTGLYI…TYLQLQEAFG (300 aa)).

Belongs to the TCAF family. As to quaternary structure, interacts with TRPM8 (via N-terminus and C-terminus domains); the interaction inhibits TRPM8 channel activity. Interacts with TRPV6.

It localises to the cell membrane. Its function is as follows. Positively regulates the plasma membrane cation channel TRPM8 activity. Involved in the recruitment of TRPM8 to the cell surface. Promotes prostate cancer cell migration inhibition in a TRPM8-dependent manner. The chain is TRPM8 channel-associated factor 1 from Bos taurus (Bovine).